The chain runs to 514 residues: 2-isopropylmalate synthase (514 aa).

The Pyruvate carboxyltransferase domain occupies 4 to 266 (INVFDTSLRD…KTGLKLSELK (263 aa)). 4 residues coordinate Mn(2+): aspartate 13, histidine 201, histidine 203, and asparagine 237. The regulatory domain stretch occupies residues 390–514 (ELTALQVTYG…AKREMAKVES (125 aa)).

It belongs to the alpha-IPM synthase/homocitrate synthase family. LeuA type 1 subfamily. Homodimer. Mn(2+) serves as cofactor.

Its subcellular location is the cytoplasm. It carries out the reaction 3-methyl-2-oxobutanoate + acetyl-CoA + H2O = (2S)-2-isopropylmalate + CoA + H(+). It participates in amino-acid biosynthesis; L-leucine biosynthesis; L-leucine from 3-methyl-2-oxobutanoate: step 1/4. In terms of biological role, catalyzes the condensation of the acetyl group of acetyl-CoA with 3-methyl-2-oxobutanoate (2-ketoisovalerate) to form 3-carboxy-3-hydroxy-4-methylpentanoate (2-isopropylmalate). In Shouchella clausii (strain KSM-K16) (Alkalihalobacillus clausii), this protein is 2-isopropylmalate synthase.